A 190-amino-acid chain; its full sequence is Putative 3-methyladenine DNA glycosylase (190 aa).

The protein belongs to the DNA glycosylase MPG family.

This chain is Putative 3-methyladenine DNA glycosylase, found in Chlamydia abortus (strain DSM 27085 / S26/3) (Chlamydophila abortus).